Here is a 111-residue protein sequence, read N- to C-terminus: Probable 4-amino-4-deoxy-L-arabinose-phosphoundecaprenol flippase subunit ArnE (111 aa).

3 consecutive transmembrane segments (helical) span residues 37–57 (LIWL…WLKL), 65–85 (QAYP…HFFF), and 91–111 (LQHW…GQGI).

It belongs to the ArnE family. In terms of assembly, heterodimer of ArnE and ArnF.

It localises to the cell inner membrane. Its pathway is bacterial outer membrane biogenesis; lipopolysaccharide biosynthesis. Translocates 4-amino-4-deoxy-L-arabinose-phosphoundecaprenol (alpha-L-Ara4N-phosphoundecaprenol) from the cytoplasmic to the periplasmic side of the inner membrane. This is Probable 4-amino-4-deoxy-L-arabinose-phosphoundecaprenol flippase subunit ArnE from Hamiltonella defensa subsp. Acyrthosiphon pisum (strain 5AT).